A 396-amino-acid chain; its full sequence is Obg-like ATPase 1 (396 aa).

Residues 23–283 enclose the OBG-type G domain; that stretch reads LKIGIVGLPN…LSAEERQKYL (261 aa). 32-37 is an ATP binding site; that stretch reads NVGKST. Ser36 and Thr56 together coordinate Mg(2+). Position 231 (Leu231) interacts with ATP. The Nuclear export signal motif lies at 267–274; that stretch reads LELKLQEL. Position 294 is an N6-acetyllysine (Lys294). The region spanning 304-387 is the TGS domain; it reads QLEYFFTAGP…EDGDIIFFKF (84 aa).

The protein belongs to the TRAFAC class OBG-HflX-like GTPase superfamily. OBG GTPase family. YchF/OLA1 subfamily. In terms of assembly, monomer. It depends on Mg(2+) as a cofactor. In terms of tissue distribution, expressed in all tissues tested but its expression is more abundant in testis, liver, lung, and brain. Overexpressed in several malignancies, including cancers of the colon, rectum, ovary, lung, stomach, and uterus.

It localises to the cytoplasm. The protein resides in the nucleus. Its subcellular location is the nucleolus. Its function is as follows. Hydrolyzes ATP, and can also hydrolyze GTP with lower efficiency. Has lower affinity for GTP. This Homo sapiens (Human) protein is Obg-like ATPase 1.